Reading from the N-terminus, the 124-residue chain is SPbeta prophage-derived uncharacterized protein YoqO (124 aa).

The next 2 membrane-spanning stretches (helical) occupy residues Leu54–Phe74 and Val88–Met108.

It localises to the cell membrane. This Bacillus subtilis (strain 168) protein is SPbeta prophage-derived uncharacterized protein YoqO (yoqO).